The chain runs to 343 residues: MEKIDLLSLTLKEIEEILTNMGEKKFRGKQIFQWVNKGVKTFDEMTNLSKNLRDQLAERTYITNIKIEKKLISSIDGTIKYLFLLEDCNIIEGVVMKYHHGLTACISTQVGCAMGCTFCASTLDGLVRNLRAGEMIDQILTMQEDTGERISNIVLMGSGEPLHNYDETINFLKIINDENGLNIGNRHITLSTSGLVPQIKTLADLKIPINLAISLHAPNDELRQQTMPVAKKYAIDELIDSCRYYIEKTGRRITFEYALIKGVNDRDKDARELGDLLKGMLCHVNLIPVNNVDERGYKKPSIESIHQFQNTLKKAGIETTVRREMGADINAACGQLRRKHLQN.

The active-site Proton acceptor is the E92. The region spanning 98 to 328 (YHHGLTACIS…TTVRREMGAD (231 aa)) is the Radical SAM core domain. Residues C105 and C333 are joined by a disulfide bond. [4Fe-4S] cluster contacts are provided by C112, C116, and C119. S-adenosyl-L-methionine contacts are provided by residues 159 to 160 (GE), S191, 214 to 216 (SLH), and N290. Catalysis depends on C333, which acts as the S-methylcysteine intermediate.

This sequence belongs to the radical SAM superfamily. RlmN family. [4Fe-4S] cluster is required as a cofactor.

It is found in the cytoplasm. The catalysed reaction is adenosine(2503) in 23S rRNA + 2 reduced [2Fe-2S]-[ferredoxin] + 2 S-adenosyl-L-methionine = 2-methyladenosine(2503) in 23S rRNA + 5'-deoxyadenosine + L-methionine + 2 oxidized [2Fe-2S]-[ferredoxin] + S-adenosyl-L-homocysteine. The enzyme catalyses adenosine(37) in tRNA + 2 reduced [2Fe-2S]-[ferredoxin] + 2 S-adenosyl-L-methionine = 2-methyladenosine(37) in tRNA + 5'-deoxyadenosine + L-methionine + 2 oxidized [2Fe-2S]-[ferredoxin] + S-adenosyl-L-homocysteine. Its function is as follows. Specifically methylates position 2 of adenine 2503 in 23S rRNA and position 2 of adenine 37 in tRNAs. The polypeptide is Probable dual-specificity RNA methyltransferase RlmN (Alkaliphilus oremlandii (strain OhILAs) (Clostridium oremlandii (strain OhILAs))).